A 338-amino-acid polypeptide reads, in one-letter code: Glycerol-3-phosphate dehydrogenase [NAD(P)+] (338 aa).

S13, W14, and K108 together coordinate NADPH. K108, G139, and S141 together coordinate sn-glycerol 3-phosphate. A143 contacts NADPH. The sn-glycerol 3-phosphate site is built by K194, D247, S257, R258, and N259. K194 (proton acceptor) is an active-site residue. R258 contacts NADPH. V282 and E284 together coordinate NADPH.

It belongs to the NAD-dependent glycerol-3-phosphate dehydrogenase family.

Its subcellular location is the cytoplasm. The enzyme catalyses sn-glycerol 3-phosphate + NAD(+) = dihydroxyacetone phosphate + NADH + H(+). It catalyses the reaction sn-glycerol 3-phosphate + NADP(+) = dihydroxyacetone phosphate + NADPH + H(+). Its pathway is membrane lipid metabolism; glycerophospholipid metabolism. Its function is as follows. Catalyzes the reduction of the glycolytic intermediate dihydroxyacetone phosphate (DHAP) to sn-glycerol 3-phosphate (G3P), the key precursor for phospholipid synthesis. The chain is Glycerol-3-phosphate dehydrogenase [NAD(P)+] from Listeria monocytogenes serotype 4b (strain CLIP80459).